The sequence spans 556 residues: Arginine--tRNA ligase (556 aa).

The 'HIGH' region signature appears at 132–142; sequence ANPTGDLHLGH.

Belongs to the class-I aminoacyl-tRNA synthetase family. As to quaternary structure, monomer.

It is found in the cytoplasm. The catalysed reaction is tRNA(Arg) + L-arginine + ATP = L-arginyl-tRNA(Arg) + AMP + diphosphate. In Shouchella clausii (strain KSM-K16) (Alkalihalobacillus clausii), this protein is Arginine--tRNA ligase.